A 1001-amino-acid polypeptide reads, in one-letter code: Sarcoplasmic/endoplasmic reticulum calcium ATPase 1 (1001 aa).

Residues 1–48 (MEAAHSKSTEECLAYFGVSETTGLTPDQVKRHLEKYGHNELPAEEGKS) are Cytoplasmic-facing. A helical membrane pass occupies residues 49–69 (LWELVIEQFEDLLVRILLLAA). The Lumenal portion of the chain corresponds to 70–89 (CISFVLAWFEEGEETITAFV). A helical transmembrane segment spans residues 90–110 (EPFVILLILIANAIVGVWQER). Residues 111 to 253 (NAENAIEALK…QDKTPLQQKL (143 aa)) lie on the Cytoplasmic side of the membrane. Residues 254–273 (DEFGEQLSKVISLICVAVWL) traverse the membrane as a helical segment. Residues 274–295 (INIGHFNDPVHGGSWIRGAIYY) are Lumenal-facing. Residues 296-313 (FKIAVALAVAAIPEGLPA) traverse the membrane as a helical segment. Valine 304, alanine 305, isoleucine 307, and glutamate 309 together coordinate Ca(2+). The Cytoplasmic portion of the chain corresponds to 314–757 (VITTCLALGT…EEGRAIYNNM (444 aa)). Catalysis depends on aspartate 351, which acts as the 4-aspartylphosphate intermediate. Mg(2+) is bound by residues aspartate 351 and threonine 353. Residue threonine 353 coordinates ATP. Threonine 441 bears the Phosphothreonine mark. ATP-binding residues include glutamate 442, arginine 489, lysine 515, and arginine 560. Threonine 569 carries the phosphothreonine modification. Serine 581 carries the phosphoserine modification. Residues threonine 625, glycine 626, aspartate 627, arginine 678, and lysine 684 each coordinate ATP. Aspartate 703 is a Mg(2+) binding site. Residue asparagine 706 coordinates ATP. The chain crosses the membrane as a helical span at residues 758–777 (KQFIRYLISSNVGEVVCIFL). Residues asparagine 768 and glutamate 771 each coordinate Ca(2+). Residues 778-787 (TAALGLPEAL) lie on the Lumenal side of the membrane. The chain crosses the membrane as a helical span at residues 788 to 808 (IPVQLLWVNLVTDGLPATALG). The interaction with PLN stretch occupies residues 788 to 808 (IPVQLLWVNLVTDGLPATALG). Asparagine 796, threonine 799, and aspartate 800 together coordinate Ca(2+). Residues 809–828 (FNPPDLDIMDRPPRSPKEPL) lie on the Cytoplasmic side of the membrane. Residues 829-851 (ISGWLFFRYMAIGGYVGAATVGA) traverse the membrane as a helical segment. Residues 852–897 (AAWWFMYAEDGPGVTYHQLTHFMQCTEDHPHFEGLDCEIFEAPEPM) lie on the Lumenal side of the membrane. Residues cysteine 876 and cysteine 888 are joined by a disulfide bond. Residues 898–917 (TMALSVLVTIEMCNALNSLS) form a helical membrane-spanning segment. Ca(2+) is bound at residue glutamate 908. Residues 918–930 (ENQSLMRMPPWVN) are Cytoplasmic-facing. The chain crosses the membrane as a helical span at residues 931–949 (IWLLGSICLSMSLHFLILY). The interaction with PLN stretch occupies residues 932 to 943 (WLLGSICLSMSL). The Lumenal portion of the chain corresponds to 950–964 (VDPLPMIFKLKALDL). Residues 965–985 (TQWLMVLKISLPVIGLDEILK) form a helical membrane-spanning segment. At 986 to 1001 (FIARNYLEDPEDERRK) the chain is on the cytoplasmic side.

This sequence belongs to the cation transport ATPase (P-type) (TC 3.A.3) family. Type IIA subfamily. Interacts with sarcolipin (SLN). Interacts with phospholamban (PLN). Interacts with myoregulin (MRLN). Interacts with DWORF. Interacts with VMP1. Requires Mg(2+) as cofactor. Skeletal muscle (at protein level). Skeletal muscle, fast twitch muscle (type II) fibers.

Its subcellular location is the endoplasmic reticulum membrane. It is found in the sarcoplasmic reticulum membrane. The catalysed reaction is Ca(2+)(in) + ATP + H2O = Ca(2+)(out) + ADP + phosphate + H(+). Inhibited by sarcolipin (SLN) and myoregulin (MRLN). Has also been shown to be reversibly inhibited by phospholamban (PLN) at low calcium concentrations in vitro. Dephosphorylated PLN decreases the apparent affinity of the ATPase for calcium and this inhibition is regulated by the phosphorylation of PLN in vitro. Enhanced by DWORF; DWORF increases activity by displacing sarcolipin (SLN), phospholamban (PLN) and myoregulin (MRLN). Its function is as follows. Key regulator of striated muscle performance by acting as the major Ca(2+) ATPase responsible for the reuptake of cytosolic Ca(2+) into the sarcoplasmic reticulum. Catalyzes the hydrolysis of ATP coupled with the translocation of calcium from the cytosol to the sarcoplasmic reticulum lumen. Contributes to calcium sequestration involved in muscular excitation/contraction. This is Sarcoplasmic/endoplasmic reticulum calcium ATPase 1 (ATP2A1) from Oryctolagus cuniculus (Rabbit).